The primary structure comprises 325 residues: Malate dehydrogenase (325 aa).

NAD(+) is bound at residue 11–17 (GAAGHVS). 2 residues coordinate substrate: Arg92 and Arg98. Residues Asn105, Gln112, and 129–131 (VGN) contribute to the NAD(+) site. Substrate-binding residues include Asn131 and Arg162. The active-site Proton acceptor is the His187.

This sequence belongs to the LDH/MDH superfamily. MDH type 2 family.

It carries out the reaction (S)-malate + NAD(+) = oxaloacetate + NADH + H(+). Its function is as follows. Catalyzes the reversible oxidation of malate to oxaloacetate. The polypeptide is Malate dehydrogenase (Desulfotalea psychrophila (strain LSv54 / DSM 12343)).